The following is a 71-amino-acid chain: Large ribosomal subunit protein bL31 (71 aa).

4 residues coordinate Zn(2+): Cys-16, Cys-18, Cys-38, and Cys-41.

The protein belongs to the bacterial ribosomal protein bL31 family. Type A subfamily. As to quaternary structure, part of the 50S ribosomal subunit. The cofactor is Zn(2+).

Its function is as follows. Binds the 23S rRNA. This chain is Large ribosomal subunit protein bL31, found in Francisella tularensis subsp. novicida (strain U112).